The following is a 351-amino-acid chain: Serine/threonine-protein kinase ZRK1 (351 aa).

Positions 60–347 (FDSSCFVSQD…KELKQIEASL (288 aa)) constitute a Protein kinase domain. Residues 66–74 (VSQDVYYKW) and K87 each bind ATP. The active-site Proton acceptor is the D191.

The protein belongs to the protein kinase superfamily. Ser/Thr protein kinase family. ZRK subfamily. As to quaternary structure, component of a stable high-order oligomeric complex made of RKS1 and RPP13L4/ZAR1 which recruits Xanthomonas campestris effector XopAC/AvrAC-mediated uridylylated PBL2 in the presence of ATP to form a wheel-like pentameric resistosome; this complex triggers immunity toward X.campestris in vascular tissues. Interacts with RPP13L4/ZAR1 and uridylylated PBL2. As to expression, expressed at high levels in germinating seeds and at lower levels in adult leaves.

It carries out the reaction L-seryl-[protein] + ATP = O-phospho-L-seryl-[protein] + ADP + H(+). The enzyme catalyses L-threonyl-[protein] + ATP = O-phospho-L-threonyl-[protein] + ADP + H(+). Its function is as follows. Serine/threonine-protein kinase that confers a broad-spectrum quantitative disease resistance (QDR) to the pathogenic biotrophic bacteria Xanthomonas campestris (e.g. pv. campestris (Xcc), pv. raphani, pv. armoriaceae and pv. incanae) by restricting bacterial spread to the vascular system from the infection site; X.campestris causes black rot disease in crops. Seems to not have any kinase activity. The sequence is that of Serine/threonine-protein kinase ZRK1 from Arabidopsis thaliana (Mouse-ear cress).